A 483-amino-acid chain; its full sequence is Glycogen synthase (483 aa).

ADP-alpha-D-glucose is bound at residue Lys15.

Belongs to the glycosyltransferase 1 family. Bacterial/plant glycogen synthase subfamily.

It carries out the reaction [(1-&gt;4)-alpha-D-glucosyl](n) + ADP-alpha-D-glucose = [(1-&gt;4)-alpha-D-glucosyl](n+1) + ADP + H(+). It participates in glycan biosynthesis; glycogen biosynthesis. Its function is as follows. Synthesizes alpha-1,4-glucan chains using ADP-glucose. The sequence is that of Glycogen synthase from Petrotoga mobilis (strain DSM 10674 / SJ95).